Reading from the N-terminus, the 309-residue chain is tRNA dimethylallyltransferase (309 aa).

11–18 (GPTASGKS) contacts ATP. Substrate is bound at residue 13–18 (TASGKS). 2 interaction with substrate tRNA regions span residues 36–39 (DSMQ) and 160–164 (QRLIR).

Belongs to the IPP transferase family. As to quaternary structure, monomer. Requires Mg(2+) as cofactor.

It catalyses the reaction adenosine(37) in tRNA + dimethylallyl diphosphate = N(6)-dimethylallyladenosine(37) in tRNA + diphosphate. Catalyzes the transfer of a dimethylallyl group onto the adenine at position 37 in tRNAs that read codons beginning with uridine, leading to the formation of N6-(dimethylallyl)adenosine (i(6)A). This Rickettsia felis (strain ATCC VR-1525 / URRWXCal2) (Rickettsia azadi) protein is tRNA dimethylallyltransferase.